The primary structure comprises 180 residues: Crossover junction endodeoxyribonuclease RuvC (180 aa).

Active-site residues include Asp-7, Glu-66, and Asp-138. Mg(2+)-binding residues include Asp-7, Glu-66, and Asp-138.

The protein belongs to the RuvC family. As to quaternary structure, homodimer which binds Holliday junction (HJ) DNA. The HJ becomes 2-fold symmetrical on binding to RuvC with unstacked arms; it has a different conformation from HJ DNA in complex with RuvA. In the full resolvosome a probable DNA-RuvA(4)-RuvB(12)-RuvC(2) complex forms which resolves the HJ. It depends on Mg(2+) as a cofactor.

The protein localises to the cytoplasm. The catalysed reaction is Endonucleolytic cleavage at a junction such as a reciprocal single-stranded crossover between two homologous DNA duplexes (Holliday junction).. In terms of biological role, the RuvA-RuvB-RuvC complex processes Holliday junction (HJ) DNA during genetic recombination and DNA repair. Endonuclease that resolves HJ intermediates. Cleaves cruciform DNA by making single-stranded nicks across the HJ at symmetrical positions within the homologous arms, yielding a 5'-phosphate and a 3'-hydroxyl group; requires a central core of homology in the junction. The consensus cleavage sequence is 5'-(A/T)TT(C/G)-3'. Cleavage occurs on the 3'-side of the TT dinucleotide at the point of strand exchange. HJ branch migration catalyzed by RuvA-RuvB allows RuvC to scan DNA until it finds its consensus sequence, where it cleaves and resolves the cruciform DNA. This Janthinobacterium sp. (strain Marseille) (Minibacterium massiliensis) protein is Crossover junction endodeoxyribonuclease RuvC.